We begin with the raw amino-acid sequence, 313 residues long: B3 domain-containing protein At2g31720 (313 aa).

The disordered stretch occupies residues 80–110 (KNQDPEQNPNRVASSPSSCHLESKRPQKVVS). A compositionally biased stretch (polar residues) spans 84 to 99 (PEQNPNRVASSPSSCH). A DNA-binding region (TF-B3) is located at residues 169 to 267 (WKQILDMDFL…MLFFAFVLSD (99 aa)).

It is found in the nucleus. This is B3 domain-containing protein At2g31720 (ARF70) from Arabidopsis thaliana (Mouse-ear cress).